The sequence spans 421 residues: Glycosaminoglycan xylosylkinase homolog (421 aa).

The N-terminal stretch at 1 to 21 (MNKRSVIIAGIVASLLGLALG) is a signal peptide. N83 carries N-linked (GlcNAc...) asparagine glycosylation. Residues Q131 and K147 each coordinate ATP. Residue D166 participates in Mn(2+) binding. Intrachain disulfides connect C225–C240 and C230–C233. 252-255 (IYIV) contacts ATP. 2 cysteine pairs are disulfide-bonded: C285–C351 and C352–C409. D314 is a catalytic residue. 2 residues coordinate ATP: E319 and D329. D329 contacts Mn(2+).

This sequence belongs to the FAM20 family. It depends on Mn(2+) as a cofactor.

It is found in the golgi apparatus. The protein localises to the endoplasmic reticulum. It catalyses the reaction 3-O-(beta-D-galactosyl-(1-&gt;3)-beta-D-galactosyl-(1-&gt;4)-beta-D-xylosyl)-L-seryl-[protein] + ATP = 3-O-(beta-D-galactosyl-(1-&gt;3)-beta-D-galactosyl-(1-&gt;4)-beta-D-2-O-phosphoxylosyl)-L-seryl-[protein] + ADP + H(+). In terms of biological role, kylose kinase that mediates the 2-O-phosphorylation of xylose in the glycosaminoglycan-protein linkage region of proteoglycans. This Drosophila melanogaster (Fruit fly) protein is Glycosaminoglycan xylosylkinase homolog.